Reading from the N-terminus, the 562-residue chain is Putative transport protein YPA_0617 (562 aa).

A run of 6 helical transmembrane segments spans residues L8–G28, L37–I57, F66–F86, M94–F114, I118–A138, and N158–A178. 2 RCK C-terminal domains span residues L202–N288 and K290–F373. 5 helical membrane passes run L383–F403, F406–L426, F447–S467, M475–A495, and I541–L561.

This sequence belongs to the AAE transporter (TC 2.A.81) family. YbjL subfamily.

The protein localises to the cell membrane. The polypeptide is Putative transport protein YPA_0617 (Yersinia pestis bv. Antiqua (strain Antiqua)).